Reading from the N-terminus, the 352-residue chain is Ion-translocating oxidoreductase complex subunit D (352 aa).

5 helical membrane passes run 20–40 (IMLL…WFFG), 42–62 (GTLV…ALVL), 78–109 (ALLT…VIIA), 123–143 (PAMI…TSWL), and 148–168 (IAVN…GHTA). The residue at position 187 (Thr187) is an FMN phosphoryl threonine. A run of 5 helical transmembrane segments spans residues 214 to 234 (ILAG…GVWL), 242 to 262 (WHIP…GWLF), 267 to 287 (LAAP…FFIL), 301 to 321 (LIFG…GGYP), and 322 to 342 (DGVA…DYYT).

It belongs to the NqrB/RnfD family. In terms of assembly, the complex is composed of six subunits: RsxA, RsxB, RsxC, RsxD, RsxE and RsxG. FMN serves as cofactor.

Its subcellular location is the cell inner membrane. In terms of biological role, part of a membrane-bound complex that couples electron transfer with translocation of ions across the membrane. Required to maintain the reduced state of SoxR. Probably transfers electron from NAD(P)H to SoxR. The protein is Ion-translocating oxidoreductase complex subunit D of Escherichia coli (strain K12).